Here is a 144-residue protein sequence, read N- to C-terminus: Large ribosomal subunit protein uL13 (144 aa).

This sequence belongs to the universal ribosomal protein uL13 family. Part of the 50S ribosomal subunit.

Its function is as follows. This protein is one of the early assembly proteins of the 50S ribosomal subunit, although it is not seen to bind rRNA by itself. It is important during the early stages of 50S assembly. This is Large ribosomal subunit protein uL13 from Clostridium botulinum (strain Alaska E43 / Type E3).